Consider the following 552-residue polypeptide: Keratin, type II cytoskeletal 6A (552 aa).

Positions 1 to 14 (MSTKTVIRSQTSHR) are enriched in polar residues. The interval 1-21 (MSTKTVIRSQTSHRGFSAGSA) is disordered. The interval 1-151 (MSTKTVIRSQ…DPTIQRVRTE (151 aa)) is head. The interval 152–187 (EREQIKTLNNKFASFIDKVRFLEQQNKVLDTKWALL) is coil 1A. The region spanning 152–465 (EREQIKTLNN…TLLEGEECRL (314 aa)) is the IF rod domain. The linker 1 stretch occupies residues 188–206 (QEQGTKTVRQGLETLFEQY). Residues 207 to 298 (INDLRKELDN…ALYEAELSQM (92 aa)) are coil 1B. The linker 12 stretch occupies residues 299 to 322 (QTHISDTSVVLSMDNNRSLDLDSI). Residues 323–461 (IAEVKAQYEE…ATYRTLLEGE (139 aa)) are coil 2. A tail region spans residues 462–552 (ECRLNGEGVG…TSSTRKSYRP (91 aa)). The disordered stretch occupies residues 524 to 552 (ISSGLSSSGGSSSTIKYTTTSSTRKSYRP). The span at 525–552 (SSGLSSSGGSSSTIKYTTTSSTRKSYRP) shows a compositional bias: low complexity.

It belongs to the intermediate filament family. In terms of assembly, heterodimer of a type I and a type II keratin. KRT6 isomers associate with KRT16 and/or KRT17. Interacts with TCHP.

Epidermis-specific type I keratin involved in wound healing. Involved in the activation of follicular keratinocytes after wounding, while it does not play a major role in keratinocyte proliferation or migration. Participates in the regulation of epithelial migration by inhibiting the activity of SRC during wound repair. This chain is Keratin, type II cytoskeletal 6A (Krt6a), found in Rattus norvegicus (Rat).